The primary structure comprises 470 residues: Probable G-protein coupled receptor 152 (470 aa).

The disordered stretch occupies residues 1 to 25 (MDTTMEADLGATGHRPRTELDDEDS). Residues 1 to 33 (MDTTMEADLGATGHRPRTELDDEDSYPQGGWDT) lie on the Extracellular side of the membrane. The chain crosses the membrane as a helical span at residues 34 to 54 (VFLVALLLLGLPANGLMAWLA). Residues 55–65 (GSQARHGAGTR) are Cytoplasmic-facing. The chain crosses the membrane as a helical span at residues 66 to 86 (LALLLLSLALSDFLFLAAAAF). The Extracellular segment spans residues 87–105 (QILEIRHGGHWPLGTAACR). C104 and C182 form a disulfide bridge. Residues 106–126 (FYYFLWGVSYSSGLFLLAALS) traverse the membrane as a helical segment. Residues 127 to 148 (LDRCLLALCPHWYPGHRPVRLP) lie on the Cytoplasmic side of the membrane. The helical transmembrane segment at 149-169 (LWVCAGVWVLATLFSVPWLVF) threads the bilayer. The Extracellular portion of the chain corresponds to 170–194 (PEAAVWWYDLVICLDFWDSEELSLR). Residues 195–215 (MLEVLGGFLPFLLLLVCHVLT) form a helical membrane-spanning segment. Topologically, residues 216-257 (QATACRTCHRQQQPAACRGFARVARTILSAYVVLRLPYQLAQ) are cytoplasmic. Residues 258–278 (LLYLAFLWDVYSGYLLWEALV) form a helical membrane-spanning segment. Residues 279 to 281 (YSD) are Extracellular-facing. Residues 282–302 (YLILLNSCLSPFLCLMASADL) traverse the membrane as a helical segment. Residues 303-470 (RTLLRSVLSS…PEAAPGAGPT (168 aa)) lie on the Cytoplasmic side of the membrane. Positions 322–470 (PGSFTPTEPQ…PEAAPGAGPT (149 aa)) are disordered. Polar residues-rich tracts occupy residues 325 to 335 (FTPTEPQTQLD) and 348 to 414 (AQSQ…NVQT). Over residues 415-425 (PAPAASSVPSP) the composition is skewed to low complexity.

This sequence belongs to the G-protein coupled receptor 1 family.

It is found in the cell membrane. Functionally, orphan receptor. In Homo sapiens (Human), this protein is Probable G-protein coupled receptor 152 (GPR152).